The chain runs to 81 residues: CLAVATA3/ESR (CLE)-related protein 5 (81 aa).

The first 26 residues, 1-26 (MATLILKQTLIILLIIFSLQTLSSQA), serve as a signal peptide directing secretion. A hydroxyproline mark is found at Pro-73 and Pro-76. The O-linked (Ara...) hydroxyproline glycan is linked to Pro-76.

This sequence belongs to the CLV3/ESR signal peptide family. In terms of processing, the O-glycosylation (arabinosylation) of the hydroxyproline Pro-76 enhances binding affinity of the CLE5p peptide for its receptor. Mostly expressed in roots, and, to a lower extent, in seedlings, stems, apex, flowers and siliques.

The protein resides in the secreted. It localises to the extracellular space. In terms of biological role, extracellular signal peptide that regulates cell fate. The polypeptide is CLAVATA3/ESR (CLE)-related protein 5 (Arabidopsis thaliana (Mouse-ear cress)).